Here is a 792-residue protein sequence, read N- to C-terminus: Coiled-coil domain-containing protein R3HCC1L (792 aa).

The EJC-binding motif; may mediate interaction with the EJC stretch occupies residues 7–27 (RCRVRARRPDMALYVPKARRG). 2 disordered regions span residues 32–61 (KTGDEEESCGSPNSVVKEKQKESSLSQKEV) and 527–567 (EFKT…TSHT). At Ser688 the chain carries Phosphoserine. Thr712 carries the phosphothreonine modification. Residues 751–783 (RSKQSKTEREAELKKLQEARERKRLEAKQREDI) adopt a coiled-coil conformation. Positions 772–792 (RKRLEAKQREDIWEGRDQSTV) are disordered.

May interact with the exon junction complex (EJC) composed at least of CASC3, EIF4A3, MAGOH and RBM8A. As to expression, expressed in placenta.

The protein is Coiled-coil domain-containing protein R3HCC1L (R3HCC1L) of Homo sapiens (Human).